A 528-amino-acid polypeptide reads, in one-letter code: Catalase (528 aa).

Residues 1–22 are compositionally biased toward basic and acidic residues; sequence MADRREKSADQMKLWKESRANQ. The interval 1-32 is disordered; sequence MADRREKSADQMKLWKESRANQKPDVLTTGGG. Active-site residues include His75 and Asn148. Positions 194, 201, 203, 213, 237, 303, 305, and 306 each coordinate NADP(+). Position 358 (Tyr358) interacts with heme. The Microbody targeting signal; atypical signature appears at 525–528; sequence KANL.

Belongs to the catalase family. In terms of assembly, homotetramer. Heme serves as cofactor. NADP(+) is required as a cofactor.

It localises to the peroxisome matrix. It carries out the reaction 2 H2O2 = O2 + 2 H2O. Catalyzes the degradation of hydrogen peroxide (H(2)O(2)) generated by peroxisomal oxidases to water and oxygen, thereby protecting cells from the toxic effects of hydrogen peroxide. The sequence is that of Catalase (cat) from Glandirana rugosa (Japanese wrinkled frog).